We begin with the raw amino-acid sequence, 67 residues long: Putative cytosolic sulfotransferase 2 (67 aa).

31 to 33 (RDG) contacts 3'-phosphoadenylyl sulfate.

It belongs to the sulfotransferase 1 family.

It is found in the cytoplasm. In terms of biological role, sulfotransferase that utilizes 3'-phospho-5'-adenylyl sulfate (PAPS) as sulfonate donor. The sequence is that of Putative cytosolic sulfotransferase 2 (SOT2) from Arabidopsis thaliana (Mouse-ear cress).